The sequence spans 726 residues: Sister chromatid cohesion protein SCC4 (726 aa).

TPR repeat units follow at residues 7–40 (AEGL…QISF), 88–121 (FQNY…ASSV), 132–165 (CNFN…ASHI), 229–262 (RLRL…IQQL), 443–477 (PTIL…CIEA), 531–564 (ASIL…AHNH), and 572–605 (AQYL…AKKL). The tract at residues 697 to 726 (SVGIEGPSPAPSSSRLVGLDTGKRWGKRRM) is disordered.

This sequence belongs to the SCC4/mau-2 family. Interacts with SCC2 to form the cohesin loading complex. Expressed ubiquitously.

Its subcellular location is the nucleus. The protein resides in the cytoplasm. Essential protein required for cell fate determination during embryogenesis. Involved in sister chromatid cohesion. Forms a complex with SCC2, which is required for the association of the cohesin complex with chromosomes. This is Sister chromatid cohesion protein SCC4 from Arabidopsis thaliana (Mouse-ear cress).